Here is a 785-residue protein sequence, read N- to C-terminus: uncharacterized protein (785 aa).

The DOD-type homing endonuclease domain maps to 293–421 (LVGYFLSEGY…LRLISLRLGF (129 aa)).

In terms of processing, this protein undergoes a protein self splicing that involves a post-translational excision of the intervening region (intein) followed by peptide ligation.

This is an uncharacterized protein from Methanocaldococcus jannaschii (strain ATCC 43067 / DSM 2661 / JAL-1 / JCM 10045 / NBRC 100440) (Methanococcus jannaschii).